Consider the following 557-residue polypeptide: ADP-ribosylation factor-binding protein GGA1 (557 aa).

A VHS domain is found at Ala-29 to Pro-165. The 126-residue stretch at Glu-192–Gly-317 folds into the GAT domain. The residue at position 348 (Thr-348) is a Phosphothreonine. 4 positions are modified to phosphoserine: Ser-353, Ser-357, Ser-378, and Ser-394. A GAE domain is found at Ala-440 to Thr-556.

Binds to ARF1 and ARF2.

Its subcellular location is the golgi apparatus. The protein resides in the trans-Golgi network. May play a role in the regulation of membrane traffic through the trans-Golgi network. This is ADP-ribosylation factor-binding protein GGA1 (GGA1) from Saccharomyces cerevisiae (strain ATCC 204508 / S288c) (Baker's yeast).